The primary structure comprises 528 residues: Purine-cytosine permease FCY21 (528 aa).

At 1–90 the chain is on the cytoplasmic side; the sequence is MPQTHEMSLN…DDSILNAASM (90 aa). The residue at position 43 (S43) is a Phosphoserine. T46 bears the Phosphothreonine mark. The chain crosses the membrane as a helical span at residues 91 to 111; that stretch reads WFSANMVLPAYAIGALGPMVF. Topologically, residues 112–118 are extracellular; sequence DLNFGQS. The helical transmembrane segment at 119-139 threads the bilayer; it reads VFVIIFFNLLGLVSVAFFSVF. Residues 140–161 are Cytoplasmic-facing; it reads GAELGLRQMILSRYLVGNIAAR. A helical transmembrane segment spans residues 162–182; it reads IFSFINFIACIGWGIVNTVAS. The Extracellular portion of the chain corresponds to 183–198; the sequence is SQVLNMVNPGHQCPLW. The chain crosses the membrane as a helical span at residues 199 to 219; sequence AGCIVIIGATVIVTFFGYGVI. Topologically, residues 220-221 are cytoplasmic; that stretch reads HA. A helical transmembrane segment spans residues 222-242; sequence YEKWAWVPNFAVFLVIIARLA. Topologically, residues 243–260 are extracellular; the sequence is RSKKFVLGEWTSGPTTAG. Residues 261–281 traverse the membrane as a helical segment; sequence NVLSFGSTVYGFAAGWTTYAA. The Cytoplasmic segment spans residues 282-295; that stretch reads DYTVYMPRKTNKYK. A helical transmembrane segment spans residues 296–316; that stretch reads IFFSLVVGLATPLYFTMILGA. Residues 317 to 340 are Extracellular-facing; the sequence is AVAMAAIGDPAWKTYYDENSIGGL. The helical transmembrane segment at 341 to 361 threads the bilayer; sequence TFAVLVPNSVHGFGQFCCVLL. The Cytoplasmic portion of the chain corresponds to 362 to 393; it reads SLSTIANNVPNMYTIALSVQATWEPLAKVPRV. Residues 394–414 form a helical membrane-spanning segment; that stretch reads IWTLLGNAAALGIAIPACYYF. Residues 415–416 are Extracellular-facing; sequence ST. A helical membrane pass occupies residues 417–437; sequence FMNYFMDSIGYYLAIYIAIAC. Residues 438–460 are Cytoplasmic-facing; it reads SEHFIYRRSFSAYNVDDWDSWER. A helical transmembrane segment spans residues 461–481; the sequence is LPIGIAGTAALIVGAFGVALG. Topologically, residues 482 to 493 are extracellular; the sequence is MCQTYWVGEISR. Residues 494–514 form a helical membrane-spanning segment; that stretch reads LIGDYGGDIGFELGLSWAFIV. Over 515–528 the chain is Cytoplasmic; that stretch reads YNIARPFELKYFGR.

Belongs to the purine-cytosine permease (2.A.39) family.

The protein localises to the membrane. Probable purine-cytosine permease. The polypeptide is Purine-cytosine permease FCY21 (FCY21) (Saccharomyces cerevisiae (strain ATCC 204508 / S288c) (Baker's yeast)).